The following is a 112-amino-acid chain: Cytochrome c6 (112 aa).

An N-terminal signal peptide occupies residues 1–25 (MKTLLTILALTLVTLTTWLSTPAFA). Heme c-binding residues include C39, C42, H43, and M83.

The protein belongs to the cytochrome c family. PetJ subfamily. In terms of assembly, monomer. Post-translationally, binds 1 heme c group covalently per subunit.

It localises to the cellular thylakoid lumen. Functionally, functions as an electron carrier between membrane-bound cytochrome b6-f and photosystem I in oxygenic photosynthesis. The chain is Cytochrome c6 from Synechococcus sp. (strain ATCC 27167 / PCC 6312).